The sequence spans 196 residues: Probable nicotinate-nucleotide adenylyltransferase (196 aa).

It belongs to the NadD family.

The catalysed reaction is nicotinate beta-D-ribonucleotide + ATP + H(+) = deamido-NAD(+) + diphosphate. It functions in the pathway cofactor biosynthesis; NAD(+) biosynthesis; deamido-NAD(+) from nicotinate D-ribonucleotide: step 1/1. Catalyzes the reversible adenylation of nicotinate mononucleotide (NaMN) to nicotinic acid adenine dinucleotide (NaAD). The polypeptide is Probable nicotinate-nucleotide adenylyltransferase (Thermotoga sp. (strain RQ2)).